Here is a 227-residue protein sequence, read N- to C-terminus: Cytochrome c oxidase subunit 2 (227 aa).

Residues 1 to 14 lie on the Mitochondrial intermembrane side of the membrane; that stretch reads MAYPMQLGLQDATS. The helical transmembrane segment at 15 to 45 threads the bilayer; sequence PIMEELMNFHDHTLMIVFLISSLVLYLISLM. Residues 46 to 59 lie on the Mitochondrial matrix side of the membrane; it reads LTTKLIHTNTMDAQ. Residues 60-87 form a helical membrane-spanning segment; the sequence is EVETIWTILPAIILVLIALPSLRILYMM. Topologically, residues 88–227 are mitochondrial intermembrane; it reads DEINNPVLTV…FFENWSSSMT (140 aa). The Cu cation site is built by His161, Cys196, Glu198, Cys200, His204, and Met207. Glu198 lines the Mg(2+) pocket.

This sequence belongs to the cytochrome c oxidase subunit 2 family. Component of the cytochrome c oxidase (complex IV, CIV), a multisubunit enzyme composed of 14 subunits. The complex is composed of a catalytic core of 3 subunits MT-CO1, MT-CO2 and MT-CO3, encoded in the mitochondrial DNA, and 11 supernumerary subunits COX4I, COX5A, COX5B, COX6A, COX6B, COX6C, COX7A, COX7B, COX7C, COX8 and NDUFA4, which are encoded in the nuclear genome. The complex exists as a monomer or a dimer and forms supercomplexes (SCs) in the inner mitochondrial membrane with NADH-ubiquinone oxidoreductase (complex I, CI) and ubiquinol-cytochrome c oxidoreductase (cytochrome b-c1 complex, complex III, CIII), resulting in different assemblies (supercomplex SCI(1)III(2)IV(1) and megacomplex MCI(2)III(2)IV(2)). Found in a complex with TMEM177, COA6, COX18, COX20, SCO1 and SCO2. Interacts with TMEM177 in a COX20-dependent manner. Interacts with COX20. Interacts with COX16. Requires Cu cation as cofactor.

The protein resides in the mitochondrion inner membrane. It catalyses the reaction 4 Fe(II)-[cytochrome c] + O2 + 8 H(+)(in) = 4 Fe(III)-[cytochrome c] + 2 H2O + 4 H(+)(out). Functionally, component of the cytochrome c oxidase, the last enzyme in the mitochondrial electron transport chain which drives oxidative phosphorylation. The respiratory chain contains 3 multisubunit complexes succinate dehydrogenase (complex II, CII), ubiquinol-cytochrome c oxidoreductase (cytochrome b-c1 complex, complex III, CIII) and cytochrome c oxidase (complex IV, CIV), that cooperate to transfer electrons derived from NADH and succinate to molecular oxygen, creating an electrochemical gradient over the inner membrane that drives transmembrane transport and the ATP synthase. Cytochrome c oxidase is the component of the respiratory chain that catalyzes the reduction of oxygen to water. Electrons originating from reduced cytochrome c in the intermembrane space (IMS) are transferred via the dinuclear copper A center (CU(A)) of subunit 2 and heme A of subunit 1 to the active site in subunit 1, a binuclear center (BNC) formed by heme A3 and copper B (CU(B)). The BNC reduces molecular oxygen to 2 water molecules using 4 electrons from cytochrome c in the IMS and 4 protons from the mitochondrial matrix. This Desmodillus auricularis (Cape short-eared gerbil) protein is Cytochrome c oxidase subunit 2 (MT-CO2).